Consider the following 294-residue polypeptide: Epimerase family protein SDR39U1 (294 aa).

NADP(+)-binding positions include 31-32 (SR), 58-59 (LA), glutamate 77, arginine 82, and valine 160.

This sequence belongs to the NAD(P)-dependent epimerase/dehydratase family. SDR39U1 subfamily.

In terms of biological role, putative NADP-dependent oxidoreductase. This Bos taurus (Bovine) protein is Epimerase family protein SDR39U1 (SDR39U1).